The primary structure comprises 617 residues: E3 ubiquitin-protein ligase ORTHRUS 1 (617 aa).

Residues 12 to 62 (DGVCMRCQVNPPSEETLTCGTCVTPWHVPCLLPESLASSTGEWECPDCSGV) form a PHD-type zinc finger. The RING-type 1 zinc finger occupies 129–169 (CSICIQLPERPITTPCGHNFCLKCFEKWAVGQGKLTCMICR). In terms of domain architecture, YDG spans 258–407 (TRKQGVLVGE…FKVCRYLFVR (150 aa)). The RING-type 2 zinc-finger motif lies at 495-552 (CQICREVLSLPVTTPCAHNFCKACLEAKFAGITQLRERSNGGRKLRAKKNIMTCPCCT). Residues 563–593 (QVNREMMEIIENFKKSEEEADASISEEEEEE) are a coiled coil. The disordered stretch occupies residues 575–617 (FKKSEEEADASISEEEEEESEPPTKKIKMDNNSVGGSGTSLSA). Acidic residues predominate over residues 580-595 (EEADASISEEEEEESE). Residues 604–617 (DNNSVGGSGTSLSA) are compositionally biased toward polar residues.

In terms of tissue distribution, expressed in inflorescences and leaves.

It localises to the nucleus. It carries out the reaction S-ubiquitinyl-[E2 ubiquitin-conjugating enzyme]-L-cysteine + [acceptor protein]-L-lysine = [E2 ubiquitin-conjugating enzyme]-L-cysteine + N(6)-ubiquitinyl-[acceptor protein]-L-lysine.. It functions in the pathway protein modification; protein ubiquitination. E3 ubiquitin-protein ligase. Participates in CpG methylation-dependent transcriptional regulation and epigenetic transcriptional silencing. Mediates ubiquitination with the E2 ubiquitin-conjugating enzymes UBC11, UBC8 and UBC8 homologs (e.g. UBC10, UBC11, UBC28 and UBC29) but not with UBC27, UBC30, UBC32, UBC34 and UBC36. Promotes methylation-mediated gene silencing leading, for example, to early flowering. Can bind to CpG, CpNpG, and CpNpN DNA motifs, with a strong preference for methylated forms, and with highest affinity for CpG substrate. This Arabidopsis thaliana (Mouse-ear cress) protein is E3 ubiquitin-protein ligase ORTHRUS 1 (ORTH1).